The chain runs to 359 residues: Insulin gene enhancer protein ISL-2 (359 aa).

LIM zinc-binding domains are found at residues 25–86 (AMCV…RLFG) and 87–149 (IKCA…LLER). Residues 151 to 191 (AAGSPRSPGPLPGARGLHLPDAGSGRQPALRPHVHKQTEKT) form a disordered region. Phosphoserine is present on residues S154 and S157. Positions 191–250 (TTRVRTVLNEKQLHTLRTCYAANPRPDALMKEQLVEMTGLSPRVIRVWFQNKRCKDKKKS) form a DNA-binding region, homeobox. Residues 272–301 (GTPLVAGSPIRHENAVQGSAVEVQTYQPPW) form an LIM-binding domain (LID) region. The residue at position 279 (S279) is a Phosphoserine. A compositionally biased stretch (low complexity) spans 326–336 (ESGSLGNSSGS). A disordered region spans residues 326 to 359 (ESGSLGNSSGSDVTSLSSQLPDTPNSMVPSPVET). The span at 337-359 (DVTSLSSQLPDTPNSMVPSPVET) shows a compositional bias: polar residues.

As to quaternary structure, interacts with LHX4.

It localises to the nucleus. In terms of biological role, transcriptional factor that defines subclasses of motoneurons that segregate into columns in the spinal cord and select distinct axon pathways. This Homo sapiens (Human) protein is Insulin gene enhancer protein ISL-2 (ISL2).